The sequence spans 192 residues: Adenylate kinase (192 aa).

10–15 is an ATP binding site; that stretch reads GSGKGT. An NMP region spans residues 30-59; sequence STGDMLREVISRETEVGRKAKAIINAGALV. AMP is bound by residues Thr31, Arg36, 57-59, 85-88, and Gln92; these read ALV and GYPR. The interval 126 to 142 is LID; it reads KRVQETIAVGGQVRSDD. Residue Arg127 participates in ATP binding. AMP-binding residues include Arg139 and Arg150. ATP is bound at residue Met178.

It belongs to the adenylate kinase family. Monomer.

It localises to the cytoplasm. It catalyses the reaction AMP + ATP = 2 ADP. It participates in purine metabolism; AMP biosynthesis via salvage pathway; AMP from ADP: step 1/1. Functionally, catalyzes the reversible transfer of the terminal phosphate group between ATP and AMP. Plays an important role in cellular energy homeostasis and in adenine nucleotide metabolism. In Bartonella quintana (strain Toulouse) (Rochalimaea quintana), this protein is Adenylate kinase.